The chain runs to 329 residues: Delta-aminolevulinic acid dehydratase (329 aa).

Cys122, Cys124, His131, and Cys132 together coordinate Zn(2+). Catalysis depends on Lys199, which acts as the Schiff-base intermediate with substrate. At Lys199 the chain carries N6-succinyllysine. Position 209 (Arg209) interacts with 5-aminolevulinate. At Ser215 the chain carries Phosphoserine. Arg221 provides a ligand contact to 5-aminolevulinate. Cys223 provides a ligand contact to Zn(2+). The active-site Schiff-base intermediate with substrate is Lys252. Lys252 is subject to N6-succinyllysine. Positions 279 and 318 each coordinate 5-aminolevulinate.

This sequence belongs to the ALAD family. Homooctamer; active form. Homohexamer; low activity form. The cofactor is Zn(2+).

Its subcellular location is the cytoplasm. The protein resides in the cytosol. It carries out the reaction 2 5-aminolevulinate = porphobilinogen + 2 H2O + H(+). Its pathway is porphyrin-containing compound metabolism; protoporphyrin-IX biosynthesis; coproporphyrinogen-III from 5-aminolevulinate: step 1/4. With respect to regulation, can alternate between a fully active homooctamer and a low-activity homohexamer. A bound magnesium ion may promote the assembly of the fully active homooctamer. The magnesium-binding site is absent in the low-activity homohexamer. Inhibited by compounds that favor the hexameric state. Inhibited by divalent lead ions. The lead ions partially displace the zinc cofactor. In terms of biological role, catalyzes an early step in the biosynthesis of tetrapyrroles. Binds two molecules of 5-aminolevulinate per subunit, each at a distinct site, and catalyzes their condensation to form porphobilinogen. This chain is Delta-aminolevulinic acid dehydratase (ALAD), found in Bos taurus (Bovine).